The following is a 202-amino-acid chain: Large ribosomal subunit protein uL4 (202 aa).

The segment at 47–67 (KTKAEVSGGGVKPWKQKGTGR) is disordered.

It belongs to the universal ribosomal protein uL4 family. Part of the 50S ribosomal subunit.

One of the primary rRNA binding proteins, this protein initially binds near the 5'-end of the 23S rRNA. It is important during the early stages of 50S assembly. It makes multiple contacts with different domains of the 23S rRNA in the assembled 50S subunit and ribosome. In terms of biological role, forms part of the polypeptide exit tunnel. This Dichelobacter nodosus (strain VCS1703A) protein is Large ribosomal subunit protein uL4.